A 414-amino-acid chain; its full sequence is TAR DNA-binding protein 43 (414 aa).

Glycyl lysine isopeptide (Lys-Gly) (interchain with G-Cter in SUMO2) cross-links involve residues lysine 79, lysine 84, lysine 95, lysine 102, and lysine 181. RRM domains lie at 104 to 200 and 191 to 262; these read SDLI…RCTE and RKVF…NAEP. The residue at position 183 (serine 183) is a Phosphoserine. An interaction with UBQLN2 region spans residues 216-414; sequence DVMDVFIPKP…MDSKSSGWGM (199 aa). Residues 261–274 show a composition bias toward basic and acidic residues; sequence EPKHNSNRQLERSG. Disordered stretches follow at residues 261–303 and 341–373; these read EPKH…GNNQ and ASQQ…GNNS. Lysine 263 is covalently cross-linked (Glycyl lysine isopeptide (Lys-Gly) (interchain with G-Cter in SUMO2)). Gly residues predominate over residues 275–303; it reads RFGGNPGGFGNQGGFGNSRGGGAGLGNNQ. Serine 292 carries the post-translational modification Phosphoserine. Position 293 is an omega-N-methylarginine (arginine 293). Residues 342–358 are compositionally biased toward low complexity; that stretch reads SQQNQSGPSGNNQNQGN.

In terms of assembly, monomer and component of the SFPQ-NONO complex, which is probably a heterotetramer of two 52 kDa (NONO) and two 100 kDa (SFPQ) subunits. NONO is a component of spliceosome and U5.4/6 snRNP complexes. Interacts with CPNE4 (via VWFA domain). Forms heterodimers with PSPC1; this involves formation of a coiled coil domain by helices from both proteins. Part of complex consisting of SFPQ, NONO and MATR3. Part of a complex consisting of SFPQ, NONO and NR5A1. Part of a complex consisting of SFPQ, NONO and TOP1. Interacts with SPI1. Interacts with RNF43. Interacts with PER1 and PER2. Part of the HDP-RNP complex composed of at least HEXIM1, PRKDC, XRCC5, XRCC6, paraspeckle proteins (SFPQ, NONO, PSPC1, RBM14, and MATR3) and NEAT1 RNA. Interacts (via second RRM domain) with WASL; the interaction is direct. Component of a multiprotein complex with WASL and SFPQ. Interacts with ERCC6. Interacts (via DNA-binding domain) with TET1. In terms of processing, hyperphosphorylated. Ubiquitinated.

The protein localises to the nucleus. It localises to the nucleolus. The protein resides in the nucleus speckle. Its subcellular location is the chromosome. It is found in the mitochondrion. In terms of biological role, DNA- and RNA binding protein, involved in several nuclear processes. Binds the conventional octamer sequence in double-stranded DNA. Also binds single-stranded DNA and RNA at a site independent of the duplex site. Involved in pre-mRNA splicing, probably as a heterodimer with SFPQ. Interacts with U5 snRNA, probably by binding to a purine-rich sequence located on the 3' side of U5 snRNA stem 1b. Together with PSPC1, required for the formation of nuclear paraspeckles. The SFPQ-NONO heteromer associated with MATR3 may play a role in nuclear retention of defective RNAs. The SFPQ-NONO heteromer may be involved in DNA unwinding by modulating the function of topoisomerase I/TOP1. The SFPQ-NONO heteromer may be involved in DNA non-homologous end joining (NHEJ) required for double-strand break repair and V(D)J recombination and may stabilize paired DNA ends. In vitro, the complex strongly stimulates DNA end joining, binds directly to the DNA substrates and cooperates with the Ku70/G22P1-Ku80/XRCC5 (Ku) dimer to establish a functional preligation complex. NONO is involved in transcriptional regulation. The SFPQ-NONO-NR5A1 complex binds to the CYP17 promoter and regulates basal and cAMP-dependent transcriptional activity. NONO binds to an enhancer element in long terminal repeats of endogenous intracisternal A particles (IAPs) and activates transcription. Regulates the circadian clock by repressing the transcriptional activator activity of the CLOCK-BMAL1 heterodimer. Important for the functional organization of GABAergic synapses. Plays a specific and important role in the regulation of synaptic RNAs and GPHN/gephyrin scaffold structure, through the regulation of GABRA2 transcript. Plays a key role during neuronal differentiation by recruiting TET1 to genomic loci and thereby regulating 5-hydroxymethylcytosine levels. Plays a role in the regulation of DNA virus-mediated innate immune response by assembling into the HDP-RNP complex, a complex that serves as a platform for IRF3 phosphorylation and subsequent innate immune response activation through the cGAS-STING pathway. The chain is TAR DNA-binding protein 43 (TARDBP) from Pongo abelii (Sumatran orangutan).